A 501-amino-acid polypeptide reads, in one-letter code: Acid-sensing ion channel 1A (501 aa).

Topologically, residues 1–54 (MKTSVMDLKVEPMDIDFDQPPPLQVFAHTSTLHGISHIFSYEKITAKCCLWVVF) are cytoplasmic. Residues 55-71 (FLSSLTFLMYVCIDRIQ) traverse the membrane as a helical segment. At 72–429 (FYLEYPHVTK…ETIEQRKAYE (358 aa)) the chain is on the extracellular side. Disulfide bonds link C98–C199, C177–C184, C294–C369, C312–C365, C316–C363, C325–C347, and C327–C339. Residue N164 is glycosylated (N-linked (GlcNAc...) asparagine). N-linked (GlcNAc...) asparagine glycosylation occurs at N370. A discontinuously helical membrane pass occupies residues 430-460 (VAGLLGDIGGQMGLFIGASILTILELFDYLY). A GAS motif; ion selectivity filter motif is present at residues 446 to 448 (GAS). Residues 461–501 (EVMKYRLCRCSNKKHHNNNNNTDHNAVFSLDDVNCHVSKFH) are Cytoplasmic-facing.

It belongs to the amiloride-sensitive sodium channel (TC 1.A.6) family. ASIC1 subfamily. In terms of assembly, homotrimer. Heterotrimer; with other ASIC proteins producing channel with different properties. Interacts with asic1c. Expressed in central nervous system. Faintly expressed in the trunk, presumably in dorsal root ganglia.

It is found in the cell membrane. Its subcellular location is the postsynaptic cell membrane. It localises to the cell projection. The protein localises to the dendrite. The enzyme catalyses Na(+)(in) = Na(+)(out). It catalyses the reaction K(+)(in) = K(+)(out). The catalysed reaction is Li(+)(in) = Li(+)(out). It carries out the reaction Ca(2+)(in) = Ca(2+)(out). With respect to regulation, inhibited by the diuretic drug amiloride. Forms voltage-independent, pH-gated trimeric sodium channels that act as postsynaptic excitatory receptors in the nervous system, playing a crucial role in regulating synaptic plasticity, learning, and memory. Upon extracellular pH drop this channel elicits transient, fast activating, and completely desensitizing inward currents. Displays high selectivity for sodium ions but can also permit the permeation of other cations. The sequence is that of Acid-sensing ion channel 1A (asic1a) from Danio rerio (Zebrafish).